The chain runs to 271 residues: Ribosomal RNA small subunit methyltransferase A (271 aa).

His11, Leu13, Gly38, Glu58, Asp86, and Asn101 together coordinate S-adenosyl-L-methionine.

This sequence belongs to the class I-like SAM-binding methyltransferase superfamily. rRNA adenine N(6)-methyltransferase family. RsmA subfamily.

It is found in the cytoplasm. It catalyses the reaction adenosine(1518)/adenosine(1519) in 16S rRNA + 4 S-adenosyl-L-methionine = N(6)-dimethyladenosine(1518)/N(6)-dimethyladenosine(1519) in 16S rRNA + 4 S-adenosyl-L-homocysteine + 4 H(+). Functionally, specifically dimethylates two adjacent adenosines (A1518 and A1519) in the loop of a conserved hairpin near the 3'-end of 16S rRNA in the 30S particle. May play a critical role in biogenesis of 30S subunits. The chain is Ribosomal RNA small subunit methyltransferase A from Helicobacter pylori (strain ATCC 700392 / 26695) (Campylobacter pylori).